A 284-amino-acid polypeptide reads, in one-letter code: NAD kinase (284 aa).

Catalysis depends on D67, which acts as the Proton acceptor. Residues 67–68 (DG), 141–142 (ND), R152, K169, D171, 182–187 (TGYSLS), and Q241 each bind NAD(+).

This sequence belongs to the NAD kinase family. A divalent metal cation is required as a cofactor.

It localises to the cytoplasm. The enzyme catalyses NAD(+) + ATP = ADP + NADP(+) + H(+). Functionally, involved in the regulation of the intracellular balance of NAD and NADP, and is a key enzyme in the biosynthesis of NADP. Catalyzes specifically the phosphorylation on 2'-hydroxyl of the adenosine moiety of NAD to yield NADP. This is NAD kinase from Geobacter sulfurreducens (strain ATCC 51573 / DSM 12127 / PCA).